Reading from the N-terminus, the 319-residue chain is MNLMRTAMLLAFMTVLFMAVGYVIGGRGGMMIALVIAAGMNFFSYWNSDRMVLRMYRAQEVDEHSAPEYYGIVRDLAKNAGLPMPRVYVIDSPQPNAFATGRNPENAAVAASTGLLHSLSYEEVAGVMAHELAHIQYRDTLTMTLTATLAGAISMLGNFAFFFGGNRENNNPLGFIGVLIAMIVAPLAAMLVQMAISRTREYSADRRGAEICGNPLWLSSALRKIAGAAQVIHNNDAERNPATAHMFIINPLSGERMDNLFSTHPNTENRVAALERMARETSTGSTAPVRPDNAGRKSRSVPRTGWGRGGSEPPKGPWS.

A run of 2 helical transmembrane segments spans residues 6–26 (TAML…VIGG) and 28–48 (GGMM…YWNS). A Zn(2+)-binding site is contributed by His-130. The active site involves Glu-131. His-134 is a Zn(2+) binding site. 2 helical membrane-spanning segments follow: residues 145-165 (LTAT…FFGG) and 172-192 (PLGF…AMLV). Residue Glu-201 participates in Zn(2+) binding. Residues 277 to 319 (MARETSTGSTAPVRPDNAGRKSRSVPRTGWGRGGSEPPKGPWS) are disordered.

Belongs to the peptidase M48B family. Zn(2+) is required as a cofactor.

It localises to the cell inner membrane. This is Protease HtpX homolog from Rhizobium meliloti (strain 1021) (Ensifer meliloti).